Consider the following 288-residue polypeptide: ATP synthase subunit a (288 aa).

6 consecutive transmembrane segments (helical) span residues 47-67 (LDSM…FWMV), 104-124 (LIAP…LMDL), 157-177 (DPNI…FYSI), 199-219 (PIVQ…TLIA), 237-257 (LIFI…SVPW), and 258-278 (AIFH…LTIV).

It belongs to the ATPase A chain family. As to quaternary structure, F-type ATPases have 2 components, CF(1) - the catalytic core - and CF(0) - the membrane proton channel. CF(1) has five subunits: alpha(3), beta(3), gamma(1), delta(1), epsilon(1). CF(0) has three main subunits: a(1), b(2) and c(9-12). The alpha and beta chains form an alternating ring which encloses part of the gamma chain. CF(1) is attached to CF(0) by a central stalk formed by the gamma and epsilon chains, while a peripheral stalk is formed by the delta and b chains.

It is found in the cell inner membrane. In terms of biological role, key component of the proton channel; it plays a direct role in the translocation of protons across the membrane. The protein is ATP synthase subunit a of Psychrobacter cryohalolentis (strain ATCC BAA-1226 / DSM 17306 / VKM B-2378 / K5).